Consider the following 1111-residue polypeptide: Atrial natriuretic peptide-converting enzyme (1111 aa).

Residues 1 to 112 lie on the Cytoplasmic side of the membrane; the sequence is MGRVSFNVRV…QKLVTANLLR (112 aa). The short motif at 93–96 is the DDNN motif element; that stretch reads ADSS. A helical; Signal-anchor for type II membrane protein membrane pass occupies residues 113-133; the sequence is FLLLVLIPCICALIVLLAILL. Residues 134-1111 lie on the Extracellular side of the membrane; sequence SFVGTLKKVY…QTFLQKKSQG (978 aa). N147 is a glycosylation site (N-linked (GlcNAc...) asparagine). In terms of domain architecture, FZ 1 spans 199 to 325; it reads GNTSTCVNIT…SDASRICFSL (127 aa). Cystine bridges form between C204/C264, C212/C257, C248/C288, C277/C322, C281/C305, C335/C348, C343/C361, C355/C370, C372/C384, C379/C397, C391/C406, C408/C421, C416/C434, C428/C443, C445/C458, C453/C471, C465/C480, C521/C584, C529/C577, C568/C606, C595/C636, C599/C623, C646/C658, C653/C671, C665/C680, C682/C696, C690/C709, C703/C718, C721/C733, C728/C746, and C740/C755. N296 is a glycosylation site (N-linked (GlcNAc...) asparagine). LDL-receptor class A domains follow at residues 334 to 371, 371 to 407, 407 to 444, and 444 to 481; these read LCGGGESFLCTSGLCISKKLQCNGYNDCDDWSDEAHCN, NCSEDLFHCGTGKCLHHSLVCDGYDDCGDLSDEQNCD, DCNLTKEHRCGDGRCIAAEWVCDGDHDCVDKSDEVNCS, and SCPSQGLVECRSGQCIPSTFQCDGDEDCKDGSDEENCS. The N-linked (GlcNAc...) asparagine glycan is linked to N409. An FZ 2 domain is found at 516-639; that stretch reads SNCSHCEPIT…SSDNQTCLLP (124 aa). N535 is a glycosylation site (N-linked (GlcNAc...) asparagine). LDL-receptor class A domains follow at residues 645–681, 681–719, and 720–756; these read ECSPSHFKCRSGRCVLGSRRCDGQADCDDDSDEENCG, GCKERDLWECPLNKQCLKHTLICDGFPDCSDSMDEKNCS, and FCQDDELECANHECVPRDLWCDGWTDCSDSSDEWGCV. Positions 756 to 851 constitute an SRCR domain; sequence VTLSKNGNSS…SGSEISLLCT (96 aa). An N-linked (GlcNAc...) asparagine glycan is attached at N763. Cystine bridges form between C855/C977, C893/C909, C991/C1056, and C1020/C1035. Residues 867–1100 form the Peptidase S1 domain; sequence ILGGRTSRPG…FVDWIERQIY (234 aa). Active-site charge relay system residues include H908 and D957. The Charge relay system role is filled by S1050.

Belongs to the peptidase S1 family. Post-translationally, N-glycosylated; required for processing and activation. In terms of processing, activated through proteolytic processing by a trypsin-like protease; cleaved into a N-terminal propeptide and an activated corin protease fragment. Atrial natriuretic peptide-converting enzyme, 180 kDa soluble fragment is produced by cleavage by ADAM10. Cleavage by ADAM10 to produce soluble 180 kDa soluble fragment takes place after the transmembrane region and before FZ 1. A disulfide bond links the activated corin protease fragment and the N-terminal propeptide. The disulfide bond also links the activated corin protease fragment with Atrial natriuretic peptide-converting enzyme, 180 kDa soluble fragment. Specifically expressed in heart. Also detected in kidney, aorta, brain and testis. In kidney, present in epithelial cells, with segmental expression in the proximal tubule, thick ascending limb, connecting tubule, and throughout the collecting duct (at protein level).

Its subcellular location is the cell membrane. The protein resides in the cytoplasmic vesicle. The protein localises to the secreted. Serine-type endopeptidase involved in atrial natriuretic peptide (NPPA) processing. Converts through proteolytic cleavage the non-functional propeptide NPPA into the active hormone, thereby regulating blood pressure in heart and promoting natriuresis, diuresis and vasodilation. Proteolytic cleavage of pro-NPPA also plays a role in female pregnancy by promoting trophoblast invasion and spiral artery remodeling in uterus. Also acts as a regulator of sodium reabsorption in kidney. May also process pro-NPPB the B-type natriuretic peptide. This is Atrial natriuretic peptide-converting enzyme (Corin) from Rattus norvegicus (Rat).